We begin with the raw amino-acid sequence, 203 residues long: Glycerol-3-phosphate acyltransferase (203 aa).

The next 4 membrane-spanning stretches (helical) occupy residues 6-26 (LTLLMIVAAYLAGSVSSAVLV), 82-102 (AISLGLIAIAACLGHIYPVFF), 118-138 (APIGDDLAICLMASWVVLVLI), and 141-161 (YSSLAAIITALLAPLYTWWLD).

Belongs to the PlsY family. As to quaternary structure, probably interacts with PlsX.

Its subcellular location is the cell inner membrane. It carries out the reaction an acyl phosphate + sn-glycerol 3-phosphate = a 1-acyl-sn-glycero-3-phosphate + phosphate. The protein operates within lipid metabolism; phospholipid metabolism. Its function is as follows. Catalyzes the transfer of an acyl group from acyl-phosphate (acyl-PO(4)) to glycerol-3-phosphate (G3P) to form lysophosphatidic acid (LPA). This enzyme utilizes acyl-phosphate as fatty acyl donor, but not acyl-CoA or acyl-ACP. In Shewanella oneidensis (strain ATCC 700550 / JCM 31522 / CIP 106686 / LMG 19005 / NCIMB 14063 / MR-1), this protein is Glycerol-3-phosphate acyltransferase.